Reading from the N-terminus, the 404-residue chain is Keratin, type I microfibrillar, 47.6 kDa (404 aa).

The head stretch occupies residues 1–56 (MSFNFCLPNLSFRSSCSSRPCVPSSCCGTTLPGACNIPASVGSCNWFCEGSFNGNE). Residues 56–367 (EKETMQFLND…GLLDSEDCKL (312 aa)) form the IF rod domain. The coil 1A stretch occupies residues 57-91 (KETMQFLNDRLASYLEKVRQLERENAELERRILER). The linker 1 stretch occupies residues 92–102 (SQQQEPLVCPN). Residues 103–203 (YQSYFRTIEE…HEQEVNTLRS (101 aa)) form a coil 1B region. The interval 204-219 (QLGDRLNVEVDAAPTV) is linker 12. Positions 220–363 (DLNHVLNETR…NTYRGLLDSE (144 aa)) are coil 2. Residues 364–404 (DCKLPCNPCATTNTCGKPIGPCISNPCVSRTRCGPCNTFVH) are tail.

The protein belongs to the intermediate filament family.

Functionally, wool microfibrillar keratin. In Ovis aries (Sheep), this protein is Keratin, type I microfibrillar, 47.6 kDa.